The following is a 410-amino-acid chain: D-amino acid dehydrogenase (410 aa).

9–14 (GGGIVG) is a binding site for FAD.

The protein belongs to the DadA oxidoreductase family. The cofactor is FAD.

It is found in the cell inner membrane. The enzyme catalyses a D-alpha-amino acid + a quinone + H2O = a 2-oxocarboxylate + a quinol + NH4(+). In terms of biological role, catalyzes the oxidative deamination of D-amino acids. Has broad substrate specificity; is mostly active on D-proline, and to a lesser extent, on several other D-amino acids such as D-alanine, D-phenylalanine and D-serine. Mediates electron transport from D-proline to coenzyme Q1 in vitro, and is involved in the electron transport chain from D-proline to the c-type cytochrome in vivo. This chain is D-amino acid dehydrogenase, found in Helicobacter pylori (strain ATCC 700392 / 26695) (Campylobacter pylori).